Here is a 535-residue protein sequence, read N- to C-terminus: Inositol 1,4,5-trisphosphate receptor-interacting protein-like 2 (535 aa).

An N-terminal signal peptide occupies residues 1–32 (MSVRYTLNLRVFWPLVTGLCTALVCLYHALRS). Residues 33 to 43 (SEDARAESPDG) are Extracellular-facing. The helical transmembrane segment at 44–64 (ADSGFPLLKVAILLLLGYILL) threads the bilayer. The Cytoplasmic portion of the chain corresponds to 65-535 (RCRHAIRQRL…RIQGSPEDEP (471 aa)). Ser-139 is modified (phosphoserine).

It belongs to the ITPRIP family.

It is found in the membrane. The sequence is that of Inositol 1,4,5-trisphosphate receptor-interacting protein-like 2 (Itpripl2) from Mus musculus (Mouse).